The chain runs to 271 residues: Large ribosomal subunit protein uL3c (271 aa).

A chloroplast-targeting transit peptide spans 1-49 (MAIAMAVVSFPSLLNKTTLSSSLFTPTFLPAKSSSLLIKSSPKTRFVVS). Positions 190-222 (HGSKSHRALGSIGAGTTPGRVYKGKKMPGRMGG) are disordered.

The protein belongs to the universal ribosomal protein uL3 family. In terms of assembly, part of the 50S ribosomal subunit.

It localises to the plastid. It is found in the chloroplast. One of the primary rRNA binding proteins, it binds directly near the 3'-end of the 23S rRNA, where it nucleates assembly of the 50S subunit. This chain is Large ribosomal subunit protein uL3c (RPL3A), found in Arabidopsis thaliana (Mouse-ear cress).